Here is an 873-residue protein sequence, read N- to C-terminus: Zinc fingers and homeoboxes protein 1 (873 aa).

The disordered stretch occupies residues 24–63; it reads LISDLDEGPPVLTPVENTRAESISSDEEVHESVDSDNQQN. T36 is modified (phosphothreonine). Phosphoserine occurs at positions 45, 47, and 48. 2 C2H2-type zinc fingers span residues 70–93 and 102–125; these read YECKYCTFQTPDLNMFTFHVDSEH and YVCVECNFLTKRYDALSEHNLKYH. K159 participates in a covalent cross-link: Glycyl lysine isopeptide (Lys-Gly) (interchain with G-Cter in SUMO2). The segment at 198 to 236 is disordered; that stretch reads VHHNSVEDVPEEKENEIKPDREETVENPSSSASESNTST. S202 is subject to Phosphoserine. Over residues 212-221 the composition is skewed to basic and acidic residues; the sequence is NEIKPDREET. Positions 223-236 are enriched in low complexity; sequence ENPSSSASESNTST. A required for dimerization region spans residues 272–432; sequence NSNLIPKVLI…QNNVQKSQVP (161 aa). The interval 272–564 is required for interaction with NFYA; the sequence is NSNLIPKVLI…VQPKQSWNPF (293 aa). A DNA-binding region (homeobox 1) is located at residues 284–346; that stretch reads NSIPTYNAAL…LKHGVSWTPE (63 aa). The tract at residues 431–454 is disordered; sequence VPAAQPTAETKPATAAVPTSQSVK. Glycyl lysine isopeptide (Lys-Gly) (interchain with G-Cter in SUMO2) cross-links involve residues K441, K454, and K485. Positions 464–526 form a DNA-binding region, homeobox 2; sequence SFGIRAKKTK…YNQRNSKSNQ (63 aa). Disordered stretches follow at residues 544–563, 626–668, and 732–769; these read DETTESPTVGTVQPKQSWNP, KEEK…CKKT, and SSMNGLSSLRKRGRGRPKGRGRGRPRGRPRGSKRINNW. The segment covering 550–562 has biased composition (polar residues); sequence PTVGTVQPKQSWN. A DNA-binding region (homeobox 3) is located at residues 569 to 630; sequence PQKFKEKTAE…KSKALKEEKM (62 aa). K629 is covalently cross-linked (Glycyl lysine isopeptide (Lys-Gly) (interchain with G-Cter in SUMO2)). Position 648 is a phosphoserine (S648). Positions 660-722 form a DNA-binding region, homeobox 4; that stretch reads STGKICKKTP…YAWKNGNLKW (63 aa). Positions 734–768 are required for nuclear localization; sequence MNGLSSLRKRGRGRPKGRGRGRPRGRPRGSKRINN. Residues 740-764 are compositionally biased toward basic residues; sequence LRKRGRGRPKGRGRGRPRGRPRGSK. S774 is modified (phosphoserine). A DNA-binding region (homeobox 5) is located at residues 777–832; that stretch reads KFKTGTAILKDYYLKHKFLNEQDLDELVNKSHMGYEQVREWFAERQRRSELGIELF. Residues 829–873 form a disordered region; that stretch reads IELFEENEEEDEVIDDQEEDEEETDDSDTWEPPRHVKRKLSKSDD. The segment covering 831–857 has biased composition (acidic residues); sequence LFEENEEEDEVIDDQEEDEEETDDSDT. The tract at residues 831-873 is required for repressor activity; it reads LFEENEEEDEVIDDQEEDEEETDDSDTWEPPRHVKRKLSKSDD. Positions 863 to 873 are enriched in basic residues; that stretch reads HVKRKLSKSDD.

Belongs to the ZHX family. In terms of assembly, forms homodimers. Heterodimer (via HD1 domain) with ZHX2 (via HD1 domain). Also forms a heterodimer with ZHX3 which is a prerequisite for repressor activity. Interacts with ATF7IP and NFYA. Interacts (via homeobox domains) with DNMT3B (via PWWP domain).

It localises to the nucleus. Functionally, acts as a transcriptional repressor. Increases DNMT3B-mediated repressive transcriptional activity when DNMT3B is tethered to DNA. May link molecule between DNMT3B and other co-repressor proteins. This chain is Zinc fingers and homeoboxes protein 1 (ZHX1), found in Pongo pygmaeus (Bornean orangutan).